Here is a 362-residue protein sequence, read N- to C-terminus: MTASGLYLNLSIGSADAPILQVDTTIATRGITAIFGPSGSGKTTLLRCIAGLTRATSGNILFNGAVWQDQTQFLAPHKRPIGYVFQDANLFSHLTALGNLQFAIKRANNASANELLDKVVALLGLQSLLNRYPNQLSGGEKQRVAIARALLICPQLLLMDEPLASLDEQRKQEILPYLEALHEEFSTPILYVSHAMNEVARLADNMLVLNNGTVVAHGNLNQVLTDTQSPTAQGEDTCVVLNATVESKDTKWQLICARISNAQLWIKAPDHATAINQTLRVRILARDVSLSLSEHSDSTILNKLAATVISISDDTDSAMALVKLAVGSDTLLARITRKSAHHLALQPNMQLWAQVKSVAIVG.

An ABC transporter domain is found at 1–236 (MTASGLYLNL…TQSPTAQGED (236 aa)). 36–43 (GPSGSGKT) lines the ATP pocket. The Mop domain occupies 297–362 (DSTILNKLAA…AQVKSVAIVG (66 aa)).

It belongs to the ABC transporter superfamily. Molybdate importer (TC 3.A.1.8) family. In terms of assembly, the complex is composed of two ATP-binding proteins (ModC), two transmembrane proteins (ModB) and a solute-binding protein (ModA).

The protein localises to the cell inner membrane. The catalysed reaction is molybdate(out) + ATP + H2O = molybdate(in) + ADP + phosphate + H(+). Its function is as follows. Part of the ABC transporter complex ModABC involved in molybdenum import. Responsible for energy coupling to the transport system. This Saccharophagus degradans (strain 2-40 / ATCC 43961 / DSM 17024) protein is Molybdenum import ATP-binding protein ModC.